The chain runs to 226 residues: ATP synthase F(0) complex subunit a (226 aa).

6 helical membrane-spanning segments follow: residues 6-26 (FASFITPTMMGLPIVVTIIMF), 68-88 (WALMIVSLIMFIGSTNLLGLL), 97-117 (QLSMNLSMAIPLWAGAVILGF), 138-158 (IPMLIIIETISLFIQPMALAV), 164-184 (ITAGHLLMHLIGGATLVLMDI), and 189-209 (ATITFIILLLLTVLEFAVALI).

Belongs to the ATPase A chain family. In terms of assembly, component of the ATP synthase complex composed at least of ATP5F1A/subunit alpha, ATP5F1B/subunit beta, ATP5MC1/subunit c (homooctomer), MT-ATP6/subunit a, MT-ATP8/subunit 8, ATP5ME/subunit e, ATP5MF/subunit f, ATP5MG/subunit g, ATP5MK/subunit k, ATP5MJ/subunit j, ATP5F1C/subunit gamma, ATP5F1D/subunit delta, ATP5F1E/subunit epsilon, ATP5PF/subunit F6, ATP5PB/subunit b, ATP5PD/subunit d, ATP5PO/subunit OSCP. ATP synthase complex consists of a soluble F(1) head domain (subunits alpha(3) and beta(3)) - the catalytic core - and a membrane F(0) domain - the membrane proton channel (subunits c, a, 8, e, f, g, k and j). These two domains are linked by a central stalk (subunits gamma, delta, and epsilon) rotating inside the F1 region and a stationary peripheral stalk (subunits F6, b, d, and OSCP). Interacts with DNAJC30; interaction is direct.

The protein localises to the mitochondrion inner membrane. It carries out the reaction H(+)(in) = H(+)(out). Its function is as follows. Subunit a, of the mitochondrial membrane ATP synthase complex (F(1)F(0) ATP synthase or Complex V) that produces ATP from ADP in the presence of a proton gradient across the membrane which is generated by electron transport complexes of the respiratory chain. ATP synthase complex consist of a soluble F(1) head domain - the catalytic core - and a membrane F(1) domain - the membrane proton channel. These two domains are linked by a central stalk rotating inside the F(1) region and a stationary peripheral stalk. During catalysis, ATP synthesis in the catalytic domain of F(1) is coupled via a rotary mechanism of the central stalk subunits to proton translocation. With the subunit c (ATP5MC1), forms the proton-conducting channel in the F(0) domain, that contains two crucial half-channels (inlet and outlet) that facilitate proton movement from the mitochondrial intermembrane space (IMS) into the matrix. Protons are taken up via the inlet half-channel and released through the outlet half-channel, following a Grotthuss mechanism. In Rattus norvegicus (Rat), this protein is ATP synthase F(0) complex subunit a.